The primary structure comprises 288 residues: Glycine--tRNA ligase alpha subunit (288 aa).

This sequence belongs to the class-II aminoacyl-tRNA synthetase family. As to quaternary structure, tetramer of two alpha and two beta subunits.

The protein localises to the cytoplasm. The enzyme catalyses tRNA(Gly) + glycine + ATP = glycyl-tRNA(Gly) + AMP + diphosphate. This Rickettsia peacockii (strain Rustic) protein is Glycine--tRNA ligase alpha subunit.